The chain runs to 205 residues: uncharacterized protein (205 aa).

Catalysis depends on charge relay system residues Ser119 and His160.

Belongs to the peptidase S51 family.

This is an uncharacterized protein from Listeria monocytogenes serovar 1/2a (strain ATCC BAA-679 / EGD-e).